The chain runs to 382 residues: Serine/threonine-protein kinase (382 aa).

The segment covering 1–10 has biased composition (basic and acidic residues); that stretch reads MENKQCDHLT. A disordered region spans residues 1–75; the sequence is MENKQCDHLT…ASESDEDDDD (75 aa). Positions 12 to 24 are enriched in polar residues; the sequence is WFSTTSDASESMD. Over residues 45–75 the composition is skewed to acidic residues; that stretch reads ADEDLYSDISEGDLEYSDCDSASESDEDDDD. A Protein kinase domain is found at 93–379; that stretch reads YTVIKTLTPG…AEELLSYPMF (287 aa). ATP-binding positions include 99 to 107 and lysine 122; that span reads LTPGSEGRV. Residue aspartate 207 is the Proton acceptor of the active site.

This sequence belongs to the protein kinase superfamily. Ser/Thr protein kinase family.

The catalysed reaction is L-seryl-[protein] + ATP = O-phospho-L-seryl-[protein] + ADP + H(+). It catalyses the reaction L-threonyl-[protein] + ATP = O-phospho-L-threonyl-[protein] + ADP + H(+). The chain is Serine/threonine-protein kinase (US2) from Equus caballus (Horse).